The chain runs to 165 residues: Thiol peroxidase (165 aa).

One can recognise a Thioredoxin domain in the interval 17-165 (PQVGEIVENF…NYEAALAVLA (149 aa)). Residue Cys-59 is the Cysteine sulfenic acid (-SOH) intermediate of the active site. Cys-59 and Cys-93 form a disulfide bridge.

Belongs to the peroxiredoxin family. Tpx subfamily. In terms of assembly, homodimer.

The catalysed reaction is a hydroperoxide + [thioredoxin]-dithiol = an alcohol + [thioredoxin]-disulfide + H2O. In terms of biological role, thiol-specific peroxidase that catalyzes the reduction of hydrogen peroxide and organic hydroperoxides to water and alcohols, respectively. Plays a role in cell protection against oxidative stress by detoxifying peroxides. This Haemophilus influenzae (strain ATCC 51907 / DSM 11121 / KW20 / Rd) protein is Thiol peroxidase.